A 494-amino-acid polypeptide reads, in one-letter code: Ribitol 5-phosphate transferase FKRP (494 aa).

Over 1 to 6 (MRLTRC) the chain is Cytoplasmic. Residues 7-29 (WAALAAAIILNLLVFFYVSWLQH) form a helical membrane-spanning segment. Residues 30–494 (QPRNSRARGP…NPALLSLTGG (465 aa)) lie on the Lumenal side of the membrane. An intrachain disulfide couples Cys168 to Cys191. Asn172 and Asn209 each carry an N-linked (GlcNAc...) asparagine glycan. Zn(2+) is bound by residues Cys289, Cys296, Cys317, and Cys318. The tract at residues 289–318 (CSKESARCFGTVAGDTPAYLYEGRWTPPCC) is zinc finger loop. Positions 345 and 352 each coordinate CDP-L-ribitol. CDP-L-ribitol stretches follow at residues 359–364 (WDYDVD), 437–438 (QD), and 480–482 (NPE). Mg(2+) contacts are provided by Asp360, Asp362, and Asp364.

It belongs to the LicD transferase family. In terms of assembly, homodimer; disulfide-linked. Forms a complex composed of FKRP, FKTN/fukutin, and RXYLT1/TMEM5. Also exists as large multimeric protein complexes. May interact with the dystrophin-glycoprotein complex (DGC). In terms of processing, N-glycosylated. Expressed in the retina, specifically in the inner segments of the photoreceptors, the outer plexiform layers, inner nuclear layers, and ganglion cell layers (at protein level). Expressed at highest levels in brain, lung, heart, kidney and liver.

It localises to the golgi apparatus membrane. Its subcellular location is the secreted. The protein resides in the cell membrane. It is found in the sarcolemma. The protein localises to the rough endoplasmic reticulum. It localises to the cytoplasm. The enzyme catalyses 3-O-[Rib-ol-P-3-beta-D-GalNAc-(1-&gt;3)-beta-D-GlcNAc-(1-&gt;4)-(O-6-P-alpha-D-Man)]-Thr-[protein] + CDP-L-ribitol = 3-O-[Rib-ol-P-Rib-ol-P-3-beta-D-GalNAc-(1-&gt;3)-beta-D-GlcNAc-(1-&gt;4)-(O-6-P-alpha-D-Man)]-Thr-[protein] + CMP + H(+). It participates in protein modification; protein glycosylation. In terms of biological role, catalyzes the transfer of CDP-ribitol to ribitol 5-phosphate previously attached by FKTN/fukutin of to the phosphorylated O-mannosyl trisaccharide (N-acetylgalactosamine-beta-3-N-acetylglucosamine-beta-4-(phosphate-6-)mannose), a carbohydrate structure present in alpha-dystroglycan (DAG1). This constitutes the second step in the formation of the ribose 5-phosphate tandem repeat which links the phosphorylated O-mannosyl trisaccharide to the ligand binding moiety composed of repeats of 3-xylosyl-alpha-1,3-glucuronic acid-beta-1. The chain is Ribitol 5-phosphate transferase FKRP from Mus musculus (Mouse).